Consider the following 363-residue polypeptide: Cell division cycle-associated protein 3 (363 aa).

The segment covering 1–12 (MGSAESKAQVTP) has biased composition (polar residues). Disordered stretches follow at residues 1 to 81 (MGSA…TPLR), 126 to 152 (VESQ…KAET), 191 to 210 (MNDQ…EESP), and 231 to 363 (ENLN…HSNS). Residues 93-152 (KQLSEVFVAEDSSTEGGPLGFTGPEATNLERQVVESQTAPPAGEHVNDHEVEPSVEKAET) form an F-box-like region. Positions 137-152 (HVNDHEVEPSVEKAET) are enriched in basic and acidic residues. The span at 192–210 (NDQEESPIAETMNDQEESP) shows a compositional bias: acidic residues. Residues 259–285 (SVVSTESTQATGQQQKTRGKSPRSSGV) are compositionally biased toward polar residues. Residues 296 to 308 (LLSSSSGRSPLRI) show a composition bias toward low complexity. Polar residues predominate over residues 311–321 (EDNSPNTNTQH). Residues 353-355 (KEN) carry the KEN box motif.

In terms of assembly, interacts with wee1, when wee1 is phosphorylated at 'Ser-38'. Post-translationally, phosphorylated. In terms of processing, ubiquitinated and degraded by the APC/C-Cdh1 complex during G1 phase.

Its subcellular location is the cytoplasm. The protein resides in the cytosol. It functions in the pathway protein modification; protein ubiquitination. Functionally, F-box-like protein which is required for entry into mitosis. Acts by participating in E3 ligase complexes that mediate the ubiquitination and degradation of WEE1 kinase at G2/M phase. The polypeptide is Cell division cycle-associated protein 3 (cdca3) (Xenopus laevis (African clawed frog)).